A 557-amino-acid polypeptide reads, in one-letter code: Formate--tetrahydrofolate ligase (557 aa).

Position 65 to 72 (65 to 72) interacts with ATP; that stretch reads TPAGEGKT.

Belongs to the formate--tetrahydrofolate ligase family.

The catalysed reaction is (6S)-5,6,7,8-tetrahydrofolate + formate + ATP = (6R)-10-formyltetrahydrofolate + ADP + phosphate. It participates in one-carbon metabolism; tetrahydrofolate interconversion. This chain is Formate--tetrahydrofolate ligase, found in Methylococcus capsulatus (strain ATCC 33009 / NCIMB 11132 / Bath).